Consider the following 94-residue polypeptide: Trp operon repressor homolog (94 aa).

Residues 58–81 (QREIAEKYGVSIAQITRGSNALKG) mediate DNA binding.

This sequence belongs to the TrpR family. As to quaternary structure, homodimer.

The protein resides in the cytoplasm. Functionally, this protein is an aporepressor. When complexed with L-tryptophan it binds the operator region of the trp operon and prevents the initiation of transcription. The sequence is that of Trp operon repressor homolog from Chlamydia trachomatis serovar L2 (strain ATCC VR-902B / DSM 19102 / 434/Bu).